Here is a 157-residue protein sequence, read N- to C-terminus: MGRLIFLSFGWLVVFLSLSGTGADFQCPSEWSAYGQHCYRAFSDLKTWEDAEKFCTEQEKAGHLVSIQSIQEANFVAQLVSGFISGSPKIYIWIGLRDRRKEQQCSSEWNDGSKVIYVNWREGESQMCQALTKWTEFHQWLNTDCAGHYPFICKSRV.

The first 23 residues, 1 to 23 (MGRLIFLSFGWLVVFLSLSGTGA), serve as a signal peptide directing secretion. 3 disulfide bridges follow: C27–C38, C55–C153, and C128–C145. The 121-residue stretch at 34–154 (YGQHCYRAFS…CAGHYPFICK (121 aa)) folds into the C-type lectin domain.

This sequence belongs to the snaclec family. As to quaternary structure, heterodimer; disulfide-linked. As to expression, expressed by the venom gland.

The protein localises to the secreted. In terms of biological role, interferes with one step of hemostasis (modulation of platelet aggregation, or coagulation cascade, for example). The protein is Snaclec 3 of Bitis gabonica (Gaboon adder).